A 425-amino-acid polypeptide reads, in one-letter code: Serine--tRNA ligase (425 aa).

233-235 (TAE) lines the L-serine pocket. Residue 264-266 (RRE) coordinates ATP. Glutamate 287 provides a ligand contact to L-serine. 351-354 (EISS) serves as a coordination point for ATP. Serine 385 serves as a coordination point for L-serine.

This sequence belongs to the class-II aminoacyl-tRNA synthetase family. Type-1 seryl-tRNA synthetase subfamily. In terms of assembly, homodimer. The tRNA molecule binds across the dimer.

The protein localises to the cytoplasm. The enzyme catalyses tRNA(Ser) + L-serine + ATP = L-seryl-tRNA(Ser) + AMP + diphosphate + H(+). It catalyses the reaction tRNA(Sec) + L-serine + ATP = L-seryl-tRNA(Sec) + AMP + diphosphate + H(+). Its pathway is aminoacyl-tRNA biosynthesis; selenocysteinyl-tRNA(Sec) biosynthesis; L-seryl-tRNA(Sec) from L-serine and tRNA(Sec): step 1/1. Its function is as follows. Catalyzes the attachment of serine to tRNA(Ser). Is also able to aminoacylate tRNA(Sec) with serine, to form the misacylated tRNA L-seryl-tRNA(Sec), which will be further converted into selenocysteinyl-tRNA(Sec). The sequence is that of Serine--tRNA ligase from Prochlorococcus marinus (strain MIT 9515).